The following is a 64-amino-acid chain: Large ribosomal subunit protein bL35 (64 aa).

Positions 1–15 (MPKQKSHSGASKRFR) are enriched in basic residues. The tract at residues 1–22 (MPKQKSHSGASKRFRVTGSGKV) is disordered.

The protein belongs to the bacterial ribosomal protein bL35 family.

The chain is Large ribosomal subunit protein bL35 from Frankia casuarinae (strain DSM 45818 / CECT 9043 / HFP020203 / CcI3).